The primary structure comprises 167 residues: Crossover junction endodeoxyribonuclease RuvC (167 aa).

Catalysis depends on residues Asp-11, Glu-71, and Asp-143. Mg(2+) is bound by residues Asp-11, Glu-71, and Asp-143.

Belongs to the RuvC family. In terms of assembly, homodimer which binds Holliday junction (HJ) DNA. The HJ becomes 2-fold symmetrical on binding to RuvC with unstacked arms; it has a different conformation from HJ DNA in complex with RuvA. In the full resolvosome a probable DNA-RuvA(4)-RuvB(12)-RuvC(2) complex forms which resolves the HJ. Mg(2+) serves as cofactor.

It is found in the cytoplasm. It catalyses the reaction Endonucleolytic cleavage at a junction such as a reciprocal single-stranded crossover between two homologous DNA duplexes (Holliday junction).. Its function is as follows. The RuvA-RuvB-RuvC complex processes Holliday junction (HJ) DNA during genetic recombination and DNA repair. Endonuclease that resolves HJ intermediates. Cleaves cruciform DNA by making single-stranded nicks across the HJ at symmetrical positions within the homologous arms, yielding a 5'-phosphate and a 3'-hydroxyl group; requires a central core of homology in the junction. The consensus cleavage sequence is 5'-(A/T)TT(C/G)-3'. Cleavage occurs on the 3'-side of the TT dinucleotide at the point of strand exchange. HJ branch migration catalyzed by RuvA-RuvB allows RuvC to scan DNA until it finds its consensus sequence, where it cleaves and resolves the cruciform DNA. This is Crossover junction endodeoxyribonuclease RuvC from Acidiphilium cryptum (strain JF-5).